A 614-amino-acid polypeptide reads, in one-letter code: uncharacterized protein (614 aa).

Residues 23 to 68 (YPIPSHNGDGESEKNSSDSTSSKVNAKVTSSLQGAPSTNDENSVSP) are disordered. Polar residues predominate over residues 49–68 (KVTSSLQGAPSTNDENSVSP).

This sequence to C.trachomatis CT875.

This is an uncharacterized protein from Chlamydia muridarum (strain MoPn / Nigg).